The primary structure comprises 600 residues: Dihydroxy-acid dehydratase (600 aa).

A Mg(2+)-binding site is contributed by D82. C123 provides a ligand contact to [2Fe-2S] cluster. Mg(2+) is bound by residues D124 and K125. K125 carries the post-translational modification N6-carboxylysine. Residue C192 participates in [2Fe-2S] cluster binding. E489 provides a ligand contact to Mg(2+). Catalysis depends on S515, which acts as the Proton acceptor.

This sequence belongs to the IlvD/Edd family. Homodimer. [2Fe-2S] cluster serves as cofactor. Mg(2+) is required as a cofactor.

The catalysed reaction is (2R)-2,3-dihydroxy-3-methylbutanoate = 3-methyl-2-oxobutanoate + H2O. It catalyses the reaction (2R,3R)-2,3-dihydroxy-3-methylpentanoate = (S)-3-methyl-2-oxopentanoate + H2O. The protein operates within amino-acid biosynthesis; L-isoleucine biosynthesis; L-isoleucine from 2-oxobutanoate: step 3/4. It participates in amino-acid biosynthesis; L-valine biosynthesis; L-valine from pyruvate: step 3/4. In terms of biological role, functions in the biosynthesis of branched-chain amino acids. Catalyzes the dehydration of (2R,3R)-2,3-dihydroxy-3-methylpentanoate (2,3-dihydroxy-3-methylvalerate) into 2-oxo-3-methylpentanoate (2-oxo-3-methylvalerate) and of (2R)-2,3-dihydroxy-3-methylbutanoate (2,3-dihydroxyisovalerate) into 2-oxo-3-methylbutanoate (2-oxoisovalerate), the penultimate precursor to L-isoleucine and L-valine, respectively. This Bacteroides thetaiotaomicron (strain ATCC 29148 / DSM 2079 / JCM 5827 / CCUG 10774 / NCTC 10582 / VPI-5482 / E50) protein is Dihydroxy-acid dehydratase.